A 387-amino-acid polypeptide reads, in one-letter code: Putative acid--amine ligase YjfC (387 aa).

Arg-101–Asp-103 provides a ligand contact to ATP. Residues Asp-103, Glu-116, and Asn-118 each contribute to the Mg(2+) site. ATP contacts are provided by residues Lys-265, Lys-302, Gly-309, Gln-337, and Leu-372–Thr-374.

Belongs to the glutathionylspermidine synthase preATP-grasp family.

May be a ligase forming an amide bond. Shows ATPase activity. Despite its similarity to the C-terminal synthetase domain of Gss, is not a glutathionylspermidine (Gsp) synthetase. Cannot synthesize Gsp, glutathione (GSH), or GSH intermediates, from GSH and spermidine, cysteine and glutamate, gamma-glutamylcysteine and spermidine, and gamma-glutamylcysteine and glycine. Does not bind to Gsp. The polypeptide is Putative acid--amine ligase YjfC (yjfC) (Escherichia coli (strain K12)).